A 152-amino-acid polypeptide reads, in one-letter code: UPF0266 membrane protein YobD (152 aa).

A run of 3 helical transmembrane segments spans residues 6 to 26 (LVLILFIAALLAYALYDQFIM), 45 to 65 (VDSVIFVGLVAILIYNNVTSH), and 67 to 87 (AQMTTWLLSALALMGFYIFWI).

This sequence belongs to the UPF0266 family.

It localises to the cell inner membrane. The protein is UPF0266 membrane protein YobD of Salmonella dublin (strain CT_02021853).